Consider the following 232-residue polypeptide: UPF0758 protein Clos_1766 (232 aa).

In terms of domain architecture, MPN spans 110 to 232 (KIKGPDDVSN…YFSMKEHKLI (123 aa)). Residues His-181, His-183, and Asp-194 each contribute to the Zn(2+) site. A JAMM motif motif is present at residues 181-194 (HNHPSGDPNPSGED).

It belongs to the UPF0758 family.

This Alkaliphilus oremlandii (strain OhILAs) (Clostridium oremlandii (strain OhILAs)) protein is UPF0758 protein Clos_1766.